The chain runs to 349 residues: Protein-glutamate methylesterase/protein-glutamine glutaminase 3 (349 aa).

One can recognise a Response regulatory domain in the interval 2–119 (DVLIVDDSPV…HPDFERDVES (118 aa)). Aspartate 52 is modified (4-aspartylphosphate). The 184-residue stretch at 157-340 (EGFQPGVIAI…LSPPRIAALL (184 aa)) folds into the CheB-type methylesterase domain. Catalysis depends on residues serine 169, histidine 196, and aspartate 289.

This sequence belongs to the CheB family. Phosphorylated by CheA. Phosphorylation of the N-terminal regulatory domain activates the methylesterase activity.

The protein resides in the cytoplasm. The enzyme catalyses [protein]-L-glutamate 5-O-methyl ester + H2O = L-glutamyl-[protein] + methanol + H(+). The catalysed reaction is L-glutaminyl-[protein] + H2O = L-glutamyl-[protein] + NH4(+). In terms of biological role, involved in chemotaxis. Part of a chemotaxis signal transduction system that modulates chemotaxis in response to various stimuli. Catalyzes the demethylation of specific methylglutamate residues introduced into the chemoreceptors (methyl-accepting chemotaxis proteins or MCP) by CheR. Also mediates the irreversible deamidation of specific glutamine residues to glutamic acid. The polypeptide is Protein-glutamate methylesterase/protein-glutamine glutaminase 3 (Hahella chejuensis (strain KCTC 2396)).